The sequence spans 294 residues: Cytosolic Fe-S cluster assembly factor CFD1 (294 aa).

Residue 25 to 32 (GKGGVGKS) coordinates ATP. [4Fe-4S] cluster contacts are provided by Cys-214 and Cys-217.

Belongs to the Mrp/NBP35 ATP-binding proteins family. NUBP2/CFD1 subfamily. In terms of assembly, heterotetramer of 2 NBP35 and 2 CFD1 chains. [4Fe-4S] cluster serves as cofactor.

Its subcellular location is the cytoplasm. In terms of biological role, component of the cytosolic iron-sulfur (Fe/S) protein assembly (CIA) machinery. Required for maturation of extramitochondrial Fe-S proteins. The NBP35-CFD1 heterotetramer forms a Fe-S scaffold complex, mediating the de novo assembly of an Fe-S cluster and its transfer to target apoproteins. Required for biogenesis and export of both ribosomal subunits, which may reflect a role in assembly of the Fe/S clusters in RLI1, a protein which performs rRNA processing and ribosome export. The chain is Cytosolic Fe-S cluster assembly factor CFD1 from Candida albicans (strain SC5314 / ATCC MYA-2876) (Yeast).